The following is a 145-amino-acid chain: MDESKKNERLKQLTDIQYNVTQKADTERPFQNEFYDNVAKGIYVDIVSGKPLFSSNDQYDAGCGWPSFTKPIDEAEVIEHRDLSHGMIRTEVKSVEADSHLGHVFPDGPQDQGGLRYCINSAALRFIPVDKLEEEGYQTYKKIFE.

Positions Lys-6–Val-129 constitute a MsrB domain. Cys-118 functions as the Nucleophile in the catalytic mechanism.

It belongs to the MsrB Met sulfoxide reductase family.

The enzyme catalyses L-methionyl-[protein] + [thioredoxin]-disulfide + H2O = L-methionyl-(R)-S-oxide-[protein] + [thioredoxin]-dithiol. This Listeria innocua serovar 6a (strain ATCC BAA-680 / CLIP 11262) protein is Peptide methionine sulfoxide reductase MsrB.